The primary structure comprises 466 residues: MGINCLNIFRRGLHTSSARLQVIQSTTPTKRICIVGAGPAGFYAAQLILKQLDNCVVDVVEKLPVPFGLVRFGVAPDHPEVKNVINTFTKTAEHPRLRYFGNISLGTDVSLRELRDRYHAVLLTYGADQDRQLELENEQLDNVISARKFVAWYNGLPGAENLAPDLSGRDVTIVGQGNVAVDVARMLLSPLDALKTTDTTEYALEALSCSQVERVHLVGRRGPLQAAFTIKELREMLKLPNVDTRWRTEDFSGIDMQLDKLQRPRKRLTELMLKSLKEQGRISGSKQFLPIFLRAPKAIAPGEMEFSVTELQQEAAVPTSSTERLPSHLILRSIGYKSSCVDTGINFDTRRGRVHNINGRILKDDATGEVDPGLYVAGWLGTGPTGVIVTTMNGAFAVAKTICDDINTNALDTSSVKPGYDADGKRVVTWDGWQRINDFESAAGKAKGKPREKIVSIEEMLRVAGV.

FAD-binding residues include alanine 40, glutamate 61, leucine 69, and leucine 105. NADP(+) contacts are provided by residues 176-179, 220-221, and glutamate 232; these read QGNV and RR. FAD-binding positions include tryptophan 379 and 386 to 388; that span reads GVI. Residue glycine 386 participates in NADP(+) binding.

The protein belongs to the ferredoxin--NADP reductase type 1 family. FAD is required as a cofactor. Expressed predominantly in prothoracic gland of the larval ring gland and nurse cells of the adult ovary. Low expression is all adult tissues examined.

It localises to the mitochondrion inner membrane. The enzyme catalyses 2 reduced [adrenodoxin] + NADP(+) + H(+) = 2 oxidized [adrenodoxin] + NADPH. The protein operates within steroid metabolism; cholesterol metabolism. Its function is as follows. Required for synthesis of steroid hormones, for olfactory sensory behavior and completion of the second larval molt (a steroid mediated developmental transition) and pupariation. The chain is NADPH:adrenodoxin oxidoreductase, mitochondrial (dare) from Drosophila melanogaster (Fruit fly).